Reading from the N-terminus, the 216-residue chain is Protein-L-isoaspartate O-methyltransferase (216 aa).

The active site involves S64.

It belongs to the methyltransferase superfamily. L-isoaspartyl/D-aspartyl protein methyltransferase family.

It is found in the cytoplasm. It carries out the reaction [protein]-L-isoaspartate + S-adenosyl-L-methionine = [protein]-L-isoaspartate alpha-methyl ester + S-adenosyl-L-homocysteine. Its function is as follows. Catalyzes the methyl esterification of L-isoaspartyl residues in peptides and proteins that result from spontaneous decomposition of normal L-aspartyl and L-asparaginyl residues. It plays a role in the repair and/or degradation of damaged proteins. In Paracoccus denitrificans (strain Pd 1222), this protein is Protein-L-isoaspartate O-methyltransferase.